Reading from the N-terminus, the 116-residue chain is T cell receptor alpha variable 19 (116 aa).

Residues 1-21 (MLTASLLRAVIASICVVSSMA) form the signal peptide. Residues 22-116 (QKVTQAQTEI…SAVYFCALSE (95 aa)) enclose the Ig-like domain. Cysteine 43 and cysteine 112 are joined by a disulfide. Asparagine 96 is a glycosylation site (N-linked (GlcNAc...) asparagine).

As to quaternary structure, alpha-beta TR is a heterodimer composed of an alpha and beta chain; disulfide-linked. The alpha-beta TR is associated with the transmembrane signaling CD3 coreceptor proteins to form the TR-CD3 (TcR or TCR). The assembly of alpha-beta TR heterodimers with CD3 occurs in the endoplasmic reticulum where a single alpha-beta TR heterodimer associates with one CD3D-CD3E heterodimer, one CD3G-CD3E heterodimer and one CD247 homodimer forming a stable octameric structure. CD3D-CD3E and CD3G-CD3E heterodimers preferentially associate with TR alpha and TR beta chains, respectively. The association of the CD247 homodimer is the last step of TcR assembly in the endoplasmic reticulum and is required for transport to the cell surface.

It is found in the cell membrane. Functionally, v region of the variable domain of T cell receptor (TR) alpha chain that participates in the antigen recognition. Alpha-beta T cell receptors are antigen specific receptors which are essential to the immune response and are present on the cell surface of T lymphocytes. Recognize peptide-major histocompatibility (MH) (pMH) complexes that are displayed by antigen presenting cells (APC), a prerequisite for efficient T cell adaptive immunity against pathogens. Binding of alpha-beta TR to pMH complex initiates TR-CD3 clustering on the cell surface and intracellular activation of LCK that phosphorylates the ITAM motifs of CD3G, CD3D, CD3E and CD247 enabling the recruitment of ZAP70. In turn ZAP70 phosphorylates LAT, which recruits numerous signaling molecules to form the LAT signalosome. The LAT signalosome propagates signal branching to three major signaling pathways, the calcium, the mitogen-activated protein kinase (MAPK) kinase and the nuclear factor NF-kappa-B (NF-kB) pathways, leading to the mobilization of transcription factors that are critical for gene expression and essential for T cell growth and differentiation. The T cell repertoire is generated in the thymus, by V-(D)-J rearrangement. This repertoire is then shaped by intrathymic selection events to generate a peripheral T cell pool of self-MH restricted, non-autoaggressive T cells. Post-thymic interaction of alpha-beta TR with the pMH complexes shapes TR structural and functional avidity. In Homo sapiens (Human), this protein is T cell receptor alpha variable 19.